A 158-amino-acid polypeptide reads, in one-letter code: Acetolactate synthase small subunit (158 aa).

The ACT domain maps to 4-79 (MIIAKLHNVT…DVIEVADITD (76 aa)).

The protein belongs to the acetolactate synthase small subunit family. In terms of assembly, dimer of large and small chains.

It carries out the reaction 2 pyruvate + H(+) = (2S)-2-acetolactate + CO2. Its pathway is amino-acid biosynthesis; L-isoleucine biosynthesis; L-isoleucine from 2-oxobutanoate: step 1/4. It functions in the pathway amino-acid biosynthesis; L-valine biosynthesis; L-valine from pyruvate: step 1/4. The protein is Acetolactate synthase small subunit (ilvH) of Lactococcus lactis subsp. lactis (strain IL1403) (Streptococcus lactis).